The sequence spans 285 residues: tRNA pseudouridine synthase B (285 aa).

Residue D38 is the Nucleophile of the active site.

The protein belongs to the pseudouridine synthase TruB family. Type 1 subfamily.

It carries out the reaction uridine(55) in tRNA = pseudouridine(55) in tRNA. Its function is as follows. Responsible for synthesis of pseudouridine from uracil-55 in the psi GC loop of transfer RNAs. In Geobacillus kaustophilus (strain HTA426), this protein is tRNA pseudouridine synthase B.